Here is a 621-residue protein sequence, read N- to C-terminus: E3 SUMO-protein ligase PIAS2 (621 aa).

In terms of domain architecture, SAP spans 11-45 (VSSFRVSELQVLLGFAGRNKSGRKHDLLMRALHLL). The short motif at 19 to 23 (LQVLL) is the LXXLL motif element. Glycyl lysine isopeptide (Lys-Gly) (interchain with G-Cter in SUMO2) cross-links involve residues Lys-46 and Lys-249. The PINIT domain maps to 134–299 (QPSPPIPPVH…SMSVYLVRQL (166 aa)). The SP-RING-type zinc finger occupies 331 to 412 (PDSEIATTSL…FMEILNDCSD (82 aa)). Residues Cys-362, His-364, Cys-385, and Cys-388 each contribute to the Zn(2+) site. Residues Lys-430, Lys-435, Lys-443, and Lys-452 each participate in a glycyl lysine isopeptide (Lys-Gly) (interchain with G-Cter in SUMO2) cross-link. Residues 467–473 (VDVIDLT) are SUMO1-binding. 3 positions are modified to phosphoserine: Ser-476, Ser-477, and Ser-478. Positions 484 to 492 (PPAKRKCIF) match the Nuclear localization signal motif. Residue Lys-489 forms a Glycyl lysine isopeptide (Lys-Gly) (interchain with G-Cter in SUMO2) linkage. At Ser-499 the chain carries Phosphoserine. Residues Lys-502 and Gln-562 each participate in a glycyl lysine isopeptide (Lys-Gly) (interchain with G-Cter in SUMO2) cross-link. Residues 579 to 610 (SSTSVTTTSSHESSTHVSSSSSRSETGVITSS) are compositionally biased toward low complexity. The tract at residues 579-621 (SSTSVTTTSSHESSTHVSSSSSRSETGVITSSGSNIPDIISLD) is disordered.

It belongs to the PIAS family. As to quaternary structure, binds SUMO1 and UBE2I. Interacts with AXIN1, JUN, MDM2, PARK7, TP53 and TP73 isoform alpha, but not TP73 isoform beta. Interacts with STAT4 following IL12 and IFN-alpha stimulation of T-cells. Interacts also with GTF2I, GTF2IRD1, IKFZ1, DAB2 and MSX2, as well as with several steroid receptors, including ESR1, ESR2, NR3C1, PGR, AR, and with NCOA2. Sumoylation of a target protein seems to enhance the interaction. Binds to sumoylated ELK1. Binds DNA, such as CDKN1A promoter, in a sequence-specific manner. Interacts with PLAG1. Interacts with KLF8; the interaction results in SUMO ligation and repression of KLF8 transcriptional activity and of its cell cycle progression into G(1) phase. PIAS2-beta interacts with IFIH1/MDA5. Isoform PIAS2-alpha interacts with PML (isoform PML-12). Interacts with PRDM1/Blimp-1. Post-translationally, sumoylated. Mainly expressed in testis. Isoform 3 is expressed predominantly in adult testis, weakly in pancreas, embryonic testis and sperm, and at very low levels in other organs.

It localises to the nucleus speckle. It is found in the nucleus. The protein resides in the PML body. Its pathway is protein modification; protein sumoylation. Its function is as follows. Functions as an E3-type small ubiquitin-like modifier (SUMO) ligase, stabilizing the interaction between UBE2I and the substrate, and as a SUMO-tethering factor. Plays a crucial role as a transcriptional coregulator in various cellular pathways, including the STAT pathway, the p53 pathway and the steroid hormone signaling pathway. The effects of this transcriptional coregulation, transactivation or silencing may vary depending upon the biological context and the PIAS2 isoform studied. However, it seems to be mostly involved in gene silencing. Binds to sumoylated ELK1 and enhances its transcriptional activity by preventing recruitment of HDAC2 by ELK1, thus reversing SUMO-mediated repression of ELK1 transactivation activity. Isoform PIAS2-beta, but not isoform PIAS2-alpha, promotes MDM2 sumoylation. Isoform PIAS2-alpha promotes PARK7 sumoylation. Isoform PIAS2-beta promotes NCOA2 sumoylation more efficiently than isoform PIAS2-alpha. Isoform PIAS2-alpha sumoylates PML at'Lys-65' and 'Lys-160'. In Homo sapiens (Human), this protein is E3 SUMO-protein ligase PIAS2 (PIAS2).